The primary structure comprises 173 residues: Cytochrome c-type biogenesis protein CcmE (173 aa).

Over 1–8 (MNPRRKSR) the chain is Cytoplasmic. The helical; Signal-anchor for type II membrane protein transmembrane segment at 9–29 (FKLVIFVVLGIAIASGLMLYA) threads the bilayer. Residues 30–173 (LRQNIDLFYT…RDRQEKEGAK (144 aa)) are Periplasmic-facing. Positions 131 and 135 each coordinate heme. Positions 139–173 (ELGEKMQKVHKPMGIKAADLKGESERDRQEKEGAK) are disordered. Residues 156 to 173 (ADLKGESERDRQEKEGAK) are compositionally biased toward basic and acidic residues.

This sequence belongs to the CcmE/CycJ family.

Its subcellular location is the cell inner membrane. In terms of biological role, heme chaperone required for the biogenesis of c-type cytochromes. Transiently binds heme delivered by CcmC and transfers the heme to apo-cytochromes in a process facilitated by CcmF and CcmH. The polypeptide is Cytochrome c-type biogenesis protein CcmE (Haemophilus influenzae (strain 86-028NP)).